The primary structure comprises 237 residues: Ribonuclease PH (237 aa).

Residues R86 and 124–126 (GTR) each bind phosphate.

Belongs to the RNase PH family. Homohexameric ring arranged as a trimer of dimers.

The enzyme catalyses tRNA(n+1) + phosphate = tRNA(n) + a ribonucleoside 5'-diphosphate. In terms of biological role, phosphorolytic 3'-5' exoribonuclease that plays an important role in tRNA 3'-end maturation. Removes nucleotide residues following the 3'-CCA terminus of tRNAs; can also add nucleotides to the ends of RNA molecules by using nucleoside diphosphates as substrates, but this may not be physiologically important. Probably plays a role in initiation of 16S rRNA degradation (leading to ribosome degradation) during starvation. The protein is Ribonuclease PH of Shewanella piezotolerans (strain WP3 / JCM 13877).